A 466-amino-acid polypeptide reads, in one-letter code: Methylenetetrahydrofolate--tRNA-(uracil-5-)-methyltransferase TrmFO (466 aa).

Glycine 14–glycine 19 is a binding site for FAD.

This sequence belongs to the MnmG family. TrmFO subfamily. Requires FAD as cofactor.

It localises to the cytoplasm. The enzyme catalyses uridine(54) in tRNA + (6R)-5,10-methylene-5,6,7,8-tetrahydrofolate + NADH + H(+) = 5-methyluridine(54) in tRNA + (6S)-5,6,7,8-tetrahydrofolate + NAD(+). It carries out the reaction uridine(54) in tRNA + (6R)-5,10-methylene-5,6,7,8-tetrahydrofolate + NADPH + H(+) = 5-methyluridine(54) in tRNA + (6S)-5,6,7,8-tetrahydrofolate + NADP(+). Catalyzes the folate-dependent formation of 5-methyl-uridine at position 54 (M-5-U54) in all tRNAs. The protein is Methylenetetrahydrofolate--tRNA-(uracil-5-)-methyltransferase TrmFO of Brucella canis (strain ATCC 23365 / NCTC 10854 / RM-666).